A 652-amino-acid chain; its full sequence is Epithelial sodium channel subunit gamma (652 aa).

Over 1–54 the chain is Cytoplasmic; it reads MAPGEKIKAKIKKNLPVTGPQAPNIKELMQWYCLNTNTHGCRRIVVSRGRLRRL. A helical membrane pass occupies residues 55–75; that stretch reads LWILFTLTAVALIFWQCALLI. Residues 76–537 are Extracellular-facing; the sequence is SSFYTVSVSI…EQLLSNIGGQ (462 aa). 8 disulfide bridges follow: Cys-100-Cys-286, Cys-210-Cys-217, Cys-263-Cys-270, Cys-375-Cys-460, Cys-397-Cys-456, Cys-401-Cys-452, Cys-410-Cys-437, and Cys-412-Cys-426. The interval 137–224 is gating release of inhibition by proteolysis (GRIP); protease-sensitive region that is responsible for the proteolytic activation of the channel; that stretch reads RKRREAQSWS…SDCAVYTFSS (88 aa). Asn-212 carries N-linked (GlcNAc...) asparagine glycosylation. Asn-500 is a glycosylation site (N-linked (GlcNAc...) asparagine). A helical membrane pass occupies residues 538 to 558; it reads LGLWMSCSVVCVIEIIEVFFI. Residues 559 to 652 are Cytoplasmic-facing; sequence DSLSIIARHQ…LTDTQTTFPH (94 aa). A disordered region spans residues 610-631; that stretch reads SALSLPPAPGSQVPGTPPPRYN. The PY motif; recruits WW domain-containing proteins and is thereby required for ubiquitination and inhibition of the channel by NEDD4 and NEDD4L motif lies at 626–630; that stretch reads PPPRY.

Belongs to the amiloride-sensitive sodium channel (TC 1.A.6) family. SCNN1G subfamily. Component of the heterotrimeric epithelial sodium channel (ENaC) composed of an alpha/SCNN1A, a beta/SCNN1B and a gamma/SCNN1G subunit. An additional delta/SCNN1D subunit can replace the alpha/SCNN1A subunit to form an alternative channel with specific properties. Interacts with WWP1 (via WW domains). Interacts with WWP2 (via WW domains); inhibits the channel. Interacts with the full-length immature form of PCSK9 (pro-PCSK9); inhibits ENaC by promoting its proteasomal degradation. Interacts with BPIFA1; the interaction is indirect via SCNN1B and inhibits the proteolytic maturation of SCNN1A and SCNN1G and the activation of ENaC. In terms of processing, phosphorylated on serine and threonine residues. Aldosterone and insulin increase the basal level of phosphorylation. Post-translationally, ubiquitinated. Can be ubiquitinated at multiple sites and undergo monoubiquitination and polyubiquitination. Ubiquitination by NEDD4 or NEDD4L inhibits the ENaC channel through endocytosis, intracellular retention and degradation of its individual subunits. ENaC is activated through the proteolytic maturation of its subunits. Furin cleaves the SCNN1G subunit first, followed by cleavage by prostasin (PRSS8), which results in a stepwise increase in the open probability of the channel due to the release of an inhibitory tract. BPIFA1, which is recruited by the SCNN1B subunit, prevents the proteolytic activation of ENaC. In terms of processing, N-glycosylated. N-linked glycans are processed to complex type during ENaC complex assembly and transport to the plasma membrane.

It is found in the apical cell membrane. It carries out the reaction Na(+)(in) = Na(+)(out). Originally identified and characterized by its inhibition by the diuretic drug amiloride. This is one of the three pore-forming subunits of the heterotrimeric epithelial sodium channel (ENaC), a critical regulator of sodium balance and fluid homeostasis. ENaC operates in epithelial tissues, where it mediates the electrodiffusion of sodium ions from extracellular fluid through the apical membrane of cells, with water following osmotically. It plays a key role in maintaining sodium homeostasis through electrogenic sodium reabsorption in the kidneys. Additionally, ENaC is essential for airway surface liquid homeostasis, which is crucial for proper mucus clearance. In Bos taurus (Bovine), this protein is Epithelial sodium channel subunit gamma.